The following is a 174-amino-acid chain: Soma ferritin (174 aa).

Residues 8-157 (QNYHAESEAG…DYITNLKRVG (150 aa)) form the Ferritin-like diiron domain. The Fe cation site is built by glutamate 25, glutamate 60, histidine 63, glutamate 105, and glutamine 139.

Belongs to the ferritin family. As to quaternary structure, oligomer of 12 or 24 subunits. The functional molecule is roughly spherical and contains a central cavity into which the polymeric mineral iron core is deposited. Expressed in somatic tissues but not in oocytes.

It is found in the cytoplasm. The catalysed reaction is 4 Fe(2+) + O2 + 4 H(+) = 4 Fe(3+) + 2 H2O. In terms of biological role, stores iron in a soluble, non-toxic, readily available form. Important for iron homeostasis. Has ferroxidase activity. Iron is taken up in the ferrous form and deposited as ferric hydroxides after oxidation. The chain is Soma ferritin from Lymnaea stagnalis (Great pond snail).